A 298-amino-acid chain; its full sequence is Nucleotide-binding protein Dred_3054 (298 aa).

20-27 (GMSGAGKT) lines the ATP pocket. Residue 71 to 74 (DIRG) coordinates GTP.

It belongs to the RapZ-like family.

Displays ATPase and GTPase activities. The chain is Nucleotide-binding protein Dred_3054 from Desulforamulus reducens (strain ATCC BAA-1160 / DSM 100696 / MI-1) (Desulfotomaculum reducens).